The chain runs to 78 residues: UPF0270 protein YPTB3725 (78 aa).

Belongs to the UPF0270 family.

The polypeptide is UPF0270 protein YPTB3725 (Yersinia pseudotuberculosis serotype I (strain IP32953)).